The sequence spans 150 residues: Probable FKBP-type 16 kDa peptidyl-prolyl cis-trans isomerase (150 aa).

One can recognise a PPIase FKBP-type domain in the interval 14-88 (NTEVTLHFAL…PNPQNVQIIP (75 aa)).

It belongs to the FKBP-type PPIase family.

It carries out the reaction [protein]-peptidylproline (omega=180) = [protein]-peptidylproline (omega=0). PPIases accelerate the folding of proteins. This chain is Probable FKBP-type 16 kDa peptidyl-prolyl cis-trans isomerase (yaaD), found in Pseudomonas fluorescens.